The chain runs to 434 residues: tRNA modification GTPase MnmE (434 aa).

(6S)-5-formyl-5,6,7,8-tetrahydrofolate contacts are provided by Arg-20, Glu-79, and Val-119. Positions 219 to 361 (GLRVVLAGRP…LQEKLVEIGK (143 aa)) constitute a TrmE-type G domain. Residues 229–234 (NAGKST), 248–254 (APIAGTT), and 273–276 (DTAG) each bind GTP. The Mg(2+) site is built by Ser-233 and Thr-254. Lys-434 provides a ligand contact to (6S)-5-formyl-5,6,7,8-tetrahydrofolate.

It belongs to the TRAFAC class TrmE-Era-EngA-EngB-Septin-like GTPase superfamily. TrmE GTPase family. In terms of assembly, homodimer. Heterotetramer of two MnmE and two MnmG subunits. K(+) is required as a cofactor.

The protein localises to the cytoplasm. In terms of biological role, exhibits a very high intrinsic GTPase hydrolysis rate. Involved in the addition of a carboxymethylaminomethyl (cmnm) group at the wobble position (U34) of certain tRNAs, forming tRNA-cmnm(5)s(2)U34. The polypeptide is tRNA modification GTPase MnmE (Zymomonas mobilis subsp. mobilis (strain ATCC 31821 / ZM4 / CP4)).